We begin with the raw amino-acid sequence, 594 residues long: Chondroitin sulfate proteoglycan 5 (594 aa).

Residues 1-12 (MGVGGTSASDTA) are compositionally biased toward polar residues. The first 18 residues, 1 to 18 (MGVGGTSASDTALSLCPT), serve as a signal peptide directing secretion. Disordered regions lie at residues 1 to 325 (MGVG…PWGL) and 343 to 418 (TTSF…SECR). At 19–481 (APEWPPRNGS…AIVTDFQVLC (463 aa)) the chain is on the extracellular side. N-linked (GlcNAc...) asparagine glycosylation is found at N26 and N44. Residues 140 to 181 (SPGLGLSSPGPNLGLPSLDLPNPNLGLPDPNLGLPNPSLGLP) show a composition bias toward low complexity. Pro residues-rich tracts occupy residues 182-195 (SPGP…PNPN) and 219-229 (IPLPSPSPGPG). Residues 248–259 (PQPSSSPAPAQR) are compositionally biased toward low complexity. Residues 298 to 310 (GGHGPGGGHGAGG) show a composition bias toward gly residues. Residues 338-377 (ADFYPTTSFYAEGDDDAEEELEEDEEEEEEEDGGLEDENG) form an interaction with TNC and TNR region. Residues 349–375 (EGDDDAEEELEEDEEEEEEEDGGLEDE) are compositionally biased toward acidic residues. N413 and N425 each carry an N-linked (GlcNAc...) asparagine glycan. The EGF-like domain maps to 429 to 471 (RSVCDLVPSYCHNGGQCYLVESHGAFCRCNTQDYTWHKGTRCE). 3 disulfides stabilise this stretch: C432-C445, C439-C455, and C457-C470. The chain crosses the membrane as a helical span at residues 482–502 (VAVGSAALVLLLLFMLTVFFA). The Cytoplasmic segment spans residues 503 to 594 (KKLYLLKTEN…GVPCLHNNLG (92 aa)). A disordered region spans residues 535–594 (TIAEGSHPNDDPGAPHKLQDPLKPGLKDEEPLSILSTAPEEGSKGEPGGCGVPCLHNNLG). Residues 541–564 (HPNDDPGAPHKLQDPLKPGLKDEE) are compositionally biased toward basic and acidic residues.

Binds TNC and TNR. The 80 kDa form but not the 140 kDa form can bind TNC and TNR when expressed at the cell surface. In terms of processing, different forms exist: the 140 kDa form (also reported as 130 kDa), which probably consists of the entire protein, and the 38 and 80 kDa forms, which are probably cleaved in their N-terminus. Increase in synaptic activity, results in shedding of the extracellular domain and expression at the cell surface of a 38 kDa form. A form of 200 kDa has also been reported, which is probably hyperglycosylated. Post-translationally, N-glycosylated. O-glycosylated; contains chondroitin sulfate glycans. Part-time proteoglycan, the 200 kDa form is the only one containing chondroitin sulfate glycans. In terms of tissue distribution, expressed in astroglial and neuronal surfaces in different parts of the embryonic brain. Expressed in adult brain and retina (at protein level).

It localises to the cell membrane. Its function is as follows. May function as a growth and differentiation factor involved in neuritogenesis and more particularly in neurite extension. This Gallus gallus (Chicken) protein is Chondroitin sulfate proteoglycan 5 (CSPG5).